We begin with the raw amino-acid sequence, 380 residues long: tRNA-specific 2-thiouridylase MnmA (380 aa).

ATP is bound by residues 26-33 (AMSGGVDS) and L52. Residue C120 is the Nucleophile of the active site. An intrachain disulfide couples C120 to C217. G144 lines the ATP pocket. An interaction with tRNA region spans residues 166–168 (RDQ). Residue C217 is the Cysteine persulfide intermediate of the active site.

Belongs to the MnmA/TRMU family.

It localises to the cytoplasm. The enzyme catalyses S-sulfanyl-L-cysteinyl-[protein] + uridine(34) in tRNA + AH2 + ATP = 2-thiouridine(34) in tRNA + L-cysteinyl-[protein] + A + AMP + diphosphate + H(+). In terms of biological role, catalyzes the 2-thiolation of uridine at the wobble position (U34) of tRNA, leading to the formation of s(2)U34. This Roseobacter denitrificans (strain ATCC 33942 / OCh 114) (Erythrobacter sp. (strain OCh 114)) protein is tRNA-specific 2-thiouridylase MnmA.